The following is a 375-amino-acid chain: Succinyl-diaminopimelate desuccinylase (375 aa).

His66 serves as a coordination point for Zn(2+). Asp68 is a catalytic residue. Asp99 contacts Zn(2+). The active-site Proton acceptor is Glu133. Residues Glu134, Glu162, and His348 each contribute to the Zn(2+) site.

It belongs to the peptidase M20A family. DapE subfamily. Homodimer. Requires Zn(2+) as cofactor. Co(2+) is required as a cofactor.

It catalyses the reaction N-succinyl-(2S,6S)-2,6-diaminopimelate + H2O = (2S,6S)-2,6-diaminopimelate + succinate. The protein operates within amino-acid biosynthesis; L-lysine biosynthesis via DAP pathway; LL-2,6-diaminopimelate from (S)-tetrahydrodipicolinate (succinylase route): step 3/3. Catalyzes the hydrolysis of N-succinyl-L,L-diaminopimelic acid (SDAP), forming succinate and LL-2,6-diaminopimelate (DAP), an intermediate involved in the bacterial biosynthesis of lysine and meso-diaminopimelic acid, an essential component of bacterial cell walls. This chain is Succinyl-diaminopimelate desuccinylase, found in Salmonella agona (strain SL483).